Consider the following 148-residue polypeptide: MDIILMENVDGLGQIGDLVKVKPGYARNFLIPQKFAVEANTRNIKELEHQKRQLEHKAQKVLQASEVVKAQIEKVTCEFALRAGDDGKLFGSVTSMEIQAKLAESGVEVDRKKIQLDEPIKALGEYEVAVKLPAGILATVKVAVTALD.

Belongs to the bacterial ribosomal protein bL9 family.

In terms of biological role, binds to the 23S rRNA. The chain is Large ribosomal subunit protein bL9 from Syntrophotalea carbinolica (strain DSM 2380 / NBRC 103641 / GraBd1) (Pelobacter carbinolicus).